A 319-amino-acid polypeptide reads, in one-letter code: Acetyl-coenzyme A carboxylase carboxyl transferase subunit alpha (319 aa).

One can recognise a CoA carboxyltransferase C-terminal domain in the interval 35-296; sequence NLDEEVQRLR…KAQLLADLND (262 aa).

The protein belongs to the AccA family. As to quaternary structure, acetyl-CoA carboxylase is a heterohexamer composed of biotin carboxyl carrier protein (AccB), biotin carboxylase (AccC) and two subunits each of ACCase subunit alpha (AccA) and ACCase subunit beta (AccD).

The protein localises to the cytoplasm. It carries out the reaction N(6)-carboxybiotinyl-L-lysyl-[protein] + acetyl-CoA = N(6)-biotinyl-L-lysyl-[protein] + malonyl-CoA. It functions in the pathway lipid metabolism; malonyl-CoA biosynthesis; malonyl-CoA from acetyl-CoA: step 1/1. Component of the acetyl coenzyme A carboxylase (ACC) complex. First, biotin carboxylase catalyzes the carboxylation of biotin on its carrier protein (BCCP) and then the CO(2) group is transferred by the carboxyltransferase to acetyl-CoA to form malonyl-CoA. The polypeptide is Acetyl-coenzyme A carboxylase carboxyl transferase subunit alpha (Yersinia pseudotuberculosis serotype O:3 (strain YPIII)).